Consider the following 104-residue polypeptide: L-rhamnose mutarotase (104 aa).

Position 18 (Tyr18) interacts with substrate. Residue His22 is the Proton donor of the active site. Substrate-binding positions include Tyr41 and 76–77 (WW).

The protein belongs to the rhamnose mutarotase family. In terms of assembly, homodimer.

The protein localises to the cytoplasm. The enzyme catalyses alpha-L-rhamnose = beta-L-rhamnose. It functions in the pathway carbohydrate metabolism; L-rhamnose metabolism. In terms of biological role, involved in the anomeric conversion of L-rhamnose. In Klebsiella pneumoniae (strain 342), this protein is L-rhamnose mutarotase.